We begin with the raw amino-acid sequence, 766 residues long: FYVE, RhoGEF and PH domain-containing protein 4 (766 aa).

The tract at residues 1-150 is actin filament-binding; the sequence is MEESNPAPTS…SSIANSHDEN (150 aa). Composition is skewed to polar residues over residues 47–62 and 70–85; these read LNIP…TSSP and HSPQ…TQGQ. 2 disordered regions span residues 47-86 and 143-173; these read LNIP…QGQH and IANS…GEPG. Residues 206 to 393 form the DH domain; sequence KLHKIATELL…STAASHSNSA (188 aa). The region spanning 422–521 is the PH 1 domain; the sequence is ELIKEGQILK…WIKALQESID (100 aa). The FYVE-type zinc finger occupies 559-619; sequence DNEVTMCMKC…VCKDCYQIIS (61 aa). The Zn(2+) site is built by cysteine 565, cysteine 568, cysteine 582, cysteine 585, cysteine 590, cysteine 593, cysteine 611, and cysteine 614. In terms of domain architecture, PH 2 spans 643–740; the sequence is NSEVCSFLQY…WLKIILLAVT (98 aa). A phosphoserine mark is found at serine 702 and serine 716. The tract at residues 746–766 is disordered; sequence GPSEHLATLNNLPGPKKKSEC.

As to quaternary structure, homooligomer. Detected in thymus, lung, heart, skeletal muscle, small intestine, liver, kidney, spleen and testis. Expressed in all parts of the brain and in the spinal cord at embryonic, postnatal, and adult stages. Levels of expression are lower in postnatal and adult tissues than in embryonic tissues.

Its subcellular location is the cytoplasm. The protein resides in the cytoskeleton. It is found in the cell projection. The protein localises to the filopodium. Activates CDC42, a member of the Ras-like family of Rho- and Rac proteins, by exchanging bound GDP for free GTP. Activates MAPK8. Plays a role in regulating the actin cytoskeleton and cell shape. Promotes the formation of lamellipodia. This chain is FYVE, RhoGEF and PH domain-containing protein 4 (Fgd4), found in Mus musculus (Mouse).